The primary structure comprises 525 residues: ADP-ribosylation factor GTPase-activating protein 3 (525 aa).

The region spanning Leu-10–Arg-126 is the Arf-GAP domain. Residues Cys-25–Cys-48 form a C4-type zinc finger. Residues Val-160–Leu-233 form a disordered region. The segment covering Gly-162 to Pro-177 has biased composition (polar residues). Residues Ala-222–Leu-233 show a composition bias toward low complexity. Phosphoserine occurs at positions 232, 242, 271, and 275. Residues Gln-249 to Ser-271 are disordered. Basic and acidic residues predominate over residues Leu-293–Arg-305. 2 disordered regions span residues Leu-293–Arg-364 and Phe-377–Lys-428. Residues His-319 to Pro-333 show a composition bias toward polar residues. At Ser-332 the chain carries Phosphoserine. A compositionally biased stretch (low complexity) spans Ser-349 to Ser-363. Ser-379 is subject to Phosphoserine. The segment covering Tyr-387–Pro-398 has biased composition (basic and acidic residues). Residues Ser-437, Ser-460, Ser-462, Ser-464, Ser-466, and Ser-467 each carry the phosphoserine modification.

It localises to the cytoplasm. The protein resides in the golgi apparatus membrane. With respect to regulation, GAP activity stimulated by phosphatidylinositol 4,5-bisphosphate (PIP2). In terms of biological role, GTPase-activating protein (GAP) for ADP ribosylation factor 1 (ARF1). Hydrolysis of ARF1-bound GTP may lead to dissociation of coatomer from Golgi-derived membranes to allow fusion with target membranes. This is ADP-ribosylation factor GTPase-activating protein 3 from Rattus norvegicus (Rat).